The following is a 300-amino-acid chain: F-box/LRR-repeat protein 15 (300 aa).

Residue Met1 is modified to N-acetylmethionine. Residues 19-66 form the F-box domain; the sequence is FLDLPWEDVLLPHVLNRVPLRQLLRLQRVSRAFRSLVQLHLAGLRRFD. The interaction with SMURF1 stretch occupies residues 113 to 269; the sequence is NPQLRSVALG…ESSLSRLRKR (157 aa). LRR repeat units lie at residues 141–162, 167–188, 194–215, 220–241, and 246–267; these read RLQR…RGLA, ALEE…VYLA, GLRS…QELA, ELHH…RTLA, and VLRS…SRLR.

Belongs to the FBXL15 family. In terms of assembly, part of the SCF (SKP1-CUL1-F-box) E3 ubiquitin-protein ligase complex SCF(FBXL15) composed of CUL1, SKP1, RBX1 and FBXL15.

It localises to the cytoplasm. It functions in the pathway protein modification; protein ubiquitination. Its function is as follows. Substrate recognition component of a SCF (SKP1-CUL1-F-box protein) E3 ubiquitin-protein ligase complex which mediates the ubiquitination and subsequent proteasomal degradation of SMURF1, thereby acting as a positive regulator of the BMP signaling pathway. Required for dorsal/ventral pattern formation and bone mass maintenance. Also mediates ubiquitination of SMURF2 and WWP2. The chain is F-box/LRR-repeat protein 15 (FBXL15) from Homo sapiens (Human).